The sequence spans 3021 residues: Genome polyprotein (3021 aa).

The residue at position 2 (S2) is an N-acetylserine; by host. Positions 2-23 (STLPKPQRKTKRNTIRRPQDVK) are interaction with STAT1. An interaction with EIF2AK2/PKR region spans residues 2–58 (STLPKPQRKTKRNTIRRPQDVKFPGGGQIVGGVYVLPRRGPRLGVRATRKTSERSQP). The tract at residues 2-59 (STLPKPQRKTKRNTIRRPQDVKFPGGGQIVGGVYVLPRRGPRLGVRATRKTSERSQPR) is interaction with DDX3X. The interval 2–75 (STLPKPQRKT…PKARRSEGRS (74 aa)) is disordered. The Cytoplasmic portion of the chain corresponds to 2 to 168 (STLPKPQRKT…EDGINFATGN (167 aa)). Short sequence motifs (nuclear localization signal) lie at residues 5–13 (PKPQRKTKR) and 38–43 (PRRGPR). The segment covering 7–16 (PQRKTKRNTI) has biased composition (basic residues). At S53 the chain carries Phosphoserine; by host. 2 short sequence motifs (nuclear localization signal) span residues 58–64 (PRGRRQP) and 66–71 (PKARRS). The span at 58–68 (PRGRRQPIPKA) shows a compositional bias: basic residues. A Phosphoserine; by host modification is found at S99. The segment at 112–152 (PRRRSRNLGKVIDTLTCGFADLMGYIPLVGAPVGGVARALA) is important for endoplasmic reticulum and mitochondrial localization. At S116 the chain carries Phosphoserine; by host PKA. Residues 122 to 173 (VIDTLTCGFADLMGYIPLVGAPVGGVARALAHGVRALEDGINFATGNLPGCS) form an interaction with APOA2 region. The interval 164 to 167 (FATG) is important for lipid droplets localization. The chain crosses the membrane as a helical span at residues 169 to 189 (LPGCSFSIFLLALFSCLIHPA). The propeptide at 178–191 (LLALFSCLIHPAAS) is ER anchor for the core protein, removed in mature form by host signal peptidase. Over 190 to 358 (ASLEWRNTSG…AGAHWGILAG (169 aa)) the chain is Lumenal. 3 N-linked (GlcNAc...) asparagine; by host glycosylation sites follow: N196, N209, and N234. The segment at 265-296 (LVGAATMCSALYVGDMCGAVFLVGQAFTFRPR) is important for fusion. N-linked (GlcNAc...) asparagine; by host glycosylation occurs at N305. Residues 359-379 (LAYYSMQGNWAKVAIIMVMFS) traverse the membrane as a helical segment. Over 380-731 (GVDAHTYTTG…WEFVILVFLL (352 aa)) the chain is Lumenal. The segment at 385 to 412 (TYTTGGTASRHTQAFAGLFDIGPQQKLQ) is HVR1. N-linked (GlcNAc...) (high mannose) asparagine; by host glycans are attached at residues N417, N423, and N430. 4 disulfides stabilise this stretch: C429–C553, C452–C459, C487–C495, and C504–C509. N-linked (GlcNAc...) asparagine; by host glycosylation occurs at N448. The interval 474–479 (DANITG) is HVR2. An N-linked (GlcNAc...) asparagine; by host glycan is attached at N476. The tract at residues 481 to 494 (SDDRPYCWHYAPRP) is CD81-binding 1. N-linked (GlcNAc...) asparagine; by host glycosylation is present at N533. A CD81-binding 2 region spans residues 545–552 (PPSGRWFG). A glycan (N-linked (GlcNAc...) asparagine; by host) is linked at N557. Residues C565 and C570 are joined by a disulfide bond. N-linked (GlcNAc...) asparagine; by host glycosylation is present at N578. Intrachain disulfides connect C587–C591, C603–C626, and C613–C650. N-linked (GlcNAc...) (high mannose) asparagine; by host glycosylation is present at N651. C658 and C683 form a disulfide bridge. Residues 666–677 (SEQHPLLHSTTE) form a PKR/eIF2-alpha phosphorylation homology domain (PePHD) region. Residues 732–752 (LADARVCVALWLMLMISQTEA) form a helical membrane-spanning segment. The Lumenal segment spans residues 753–763 (ALENLVTLNAV). Residues 764–784 (AAAGTHGIGWYLVAFCAAWYV) traverse the membrane as a helical segment. At 785–787 (RGK) the chain is on the cytoplasmic side. Residues 788–809 (LVPLVTYSLTGLWSLALLVLLL) form a helical membrane-spanning segment. Residues 810–819 (PQRAYAWSGE) lie on the Lumenal side of the membrane. A helical membrane pass occupies residues 820–840 (DSATLGAGVLVLFGFFTLSPW). The Cytoplasmic segment spans residues 841–844 (YKHW). The chain crosses the membrane as a helical span at residues 845–864 (IGRLMWWNQYTICRCESALH). The Lumenal segment spans residues 865-887 (VWVPPLLARGSRDGVILLTSLLY). Residues 888 to 908 (PSLIFDITKLLMAVLGPLYLI) form a helical membrane-spanning segment. Positions 905 to 1032 (LYLIQATITT…DYREMGWRLL (128 aa)) constitute a Peptidase C18 domain. The Cytoplasmic segment spans residues 909–1663 (QATITTTPYF…CMSADLEVTT (755 aa)). The interval 910–1212 (ATITTTPYFV…PVETLSTQAR (303 aa)) is protease NS2-3. The S-palmitoyl cysteine; by host moiety is linked to residue C928. Residues 935 to 955 (IGGKYFQMIILSIGRWFNTYL) form an interaction with host SCPS1 region. Residues H958, E978, and C999 each act as for protease NS2 activity; shared with dimeric partner in the active site. Residues 1033–1214 (APITAYAQQT…ETLSTQARSP (182 aa)) enclose the Peptidase S29 domain. Active-site charge relay system; for serine protease NS3 activity residues include H1089 and D1113. Zn(2+)-binding residues include C1129 and C1131. The active-site Charge relay system; for serine protease NS3 activity is S1171. Residues C1177 and H1181 each contribute to the Zn(2+) site. The region spanning 1223–1375 (PAVPQSYQVG…SNIEEVALGS (153 aa)) is the Helicase ATP-binding domain. Position 1236–1243 (1236–1243 (APTGSGKS)) interacts with ATP. Mg(2+) is bound by residues S1243 and E1323. Residues 1322 to 1325 (DECH) carry the DECH box motif. A Helicase C-terminal domain is found at 1382–1544 (YGKAIPIALL…DLQPAETTVR (163 aa)). Residues 1492–1504 (QRRGRTGRGRLGT) are RNA-binding. The helical transmembrane segment at 1664–1684 (STWVLLGGVLAALAAYCLSVG) threads the bilayer. Residues 1685-1696 (CVVIVGHIELEG) are NS3-binding. The Cytoplasmic portion of the chain corresponds to 1685 to 1811 (CVVIVGHIEL…SVTSPLTTNQ (127 aa)). Residues 1812–1830 (TMFFNILGGWVATHLAGPQ) form a helical membrane-spanning segment. Over 1831-1834 (SSSA) the chain is Lumenal. The helical transmembrane segment at 1835–1855 (FVVSGLAGAAIGGIGLGRVLL) threads the bilayer. D1856 is a topological domain (cytoplasmic). The chain crosses the membrane as a helical span at residues 1857–1877 (ILAGYGAGVSGALVAFKIMGG). The Lumenal portion of the chain corresponds to 1878–1887 (ECPTAEDMVN). Residues 1888-1908 (LLPAILSPGALVVGVICAAIL) form a helical membrane-spanning segment. Topologically, residues 1909–1978 (RRHVGPGEGA…WINEDYPSPC (70 aa)) are cytoplasmic. The S-palmitoyl cysteine; by host moiety is linked to residue C1978. The stretch at 1979–2008 (SDDWLRTIWDWVCSVLADFKAWLSAKIMPA) is an intramembrane region. At 2009 to 3000 (LPGLPFISCQ…YHSVSRARTR (992 aa)) the chain is on the cytoplasmic side. Zn(2+) is bound by residues C2017, C2035, C2037, and C2058. The tract at residues 2126-2214 (EFFTEVDGVR…ASSSASQLSA (89 aa)) is FKBP8-binding. Residues 2126–2338 (EFFTEVDGVR…PVPPPRRKRT (213 aa)) are transcriptional activation. The tract at residues 2141 to 2145 (PPCKP) is interaction with non-structural protein 4A. The interval 2193–2215 (ARRLARGSPPSEASSSASQLSAP) is disordered. The interaction with host SKP2 stretch occupies residues 2195 to 2448 (RLARGSPPSE…ALITPCSAEE (254 aa)). 6 positions are modified to phosphoserine; by host: S2200, S2203, S2207, S2210, S2213, and S2216. Over residues 2200–2215 (SPPSEASSSASQLSAP) the composition is skewed to low complexity. The tract at residues 2216-2255 (SLKATCQTHRPHPDAELVDANLLWRQEMGSNITRVESETK) is ISDR. Residues 2216 to 2281 (SLKATCQTHR…VEPSVAAECF (66 aa)) are interaction with EIF2AK2/PKR. The segment at 2255–2312 (KVVVLDSFEPLRAETDDVEPSVAAECFKKPPKYPPALPIWARPDYNPPLLDRWKAPDY) is NS4B-binding. Residues 2305-2387 (DRWKAPDYVP…STTSKVPPSP (83 aa)) are V3. The short motif at 2328–2331 (PPVP) is the SH3-binding element. Positions 2333–2341 (PRRKRTIQL) match the Nuclear localization signal motif. K2356 participates in a covalent cross-link: Glycyl lysine isopeptide (Lys-Gly) (interchain with G-Cter in ubiquitin). The interval 2356 to 2417 (KSFPSSKPQE…DPDLSCDSWS (62 aa)) is disordered. Low complexity-rich tracts occupy residues 2359–2381 (PSSKPQEENSSSSGVDTQSSTTS) and 2388–2401 (GGESDSESCSSMPP). A phosphoserine; by host mark is found at S2459 and S2472. The RdRp catalytic domain maps to 2644-2762 (PLGFSYDTRC…VAESDGVDED (119 aa)). D2650, D2748, and D2749 together coordinate Mg(2+). Residues 3001 to 3021 (HLLLCLLLLTVGVGIFLLPAR) traverse the membrane as a helical segment.

The protein belongs to the hepacivirus polyprotein family. Homooligomer. Interacts with E1 (via C-terminus). Interacts with the non-structural protein 5A. Interacts (via N-terminus) with host STAT1 (via SH2 domain); this interaction results in decreased STAT1 phosphorylation and ubiquitin-mediated proteasome-dependent STAT1 degradation, leading to decreased IFN-stimulated gene transcription. Interacts with host STAT3; this interaction constitutively activates STAT3. Interacts with host LTBR receptor. Interacts with host TNFRSF1A receptor and possibly induces apoptosis. Interacts with host HNRPK. Interacts with host YWHAE. Interacts with host UBE3A/E6AP. Interacts with host DDX3X. Interacts with host APOA2. Interacts with host RXRA protein. Interacts with host SP110 isoform 3/Sp110b; this interaction sequesters the transcriptional corepressor SP110 away from the nucleus. Interacts with host CREB3 nuclear transcription protein; this interaction triggers cell transformation. Interacts with host ACY3. Interacts with host C1QR1. Interacts with host RBM24; this interaction, which enhances the interaction of the mature core protein with 5'-UTR, may inhibit viral translation and favor replication. Interacts with host EIF2AK2/PKR; this interaction induces the autophosphorylation of EIF2AK2. Part of the viral assembly initiation complex composed of NS2, E1, E2, NS3, NS4A, NS5A and the mature core protein. As to quaternary structure, forms a heterodimer with envelope glycoprotein E2. Interacts with mature core protein. Interacts with protease NS2. The heterodimer E1/E2 interacts with host CLDN1; this interaction plays a role in viral entry into host cell. Interacts with host SPSB2 (via C-terminus). Part of the viral assembly initiation complex composed of NS2, E1, E2, NS3, NS4A, NS5A and the mature core protein. Interacts with host NEURL3; this interaction prevents E1 binding to glycoprotein E2. In terms of assembly, forms a heterodimer with envelope glycoprotein E1. Interacts with host CD81 and SCARB1 receptors; these interactions play a role in viral entry into host cell. Interacts with host EIF2AK2/PKR; this interaction inhibits EIF2AK2 and probably allows the virus to evade the innate immune response. Interacts with host CD209/DC-SIGN and CLEC4M/DC-SIGNR. Interact with host SPCS1; this interaction is essential for viral particle assembly. Interacts with protease NS2. The heterodimer E1/E2 interacts with host CLDN1; this interaction plays a role in viral entry into host cell. Part of the viral assembly initiation complex composed of NS2, E1, E2, NS3, NS4A, NS5A and the mature core protein. Interacts with host SLC3A2/4F2hc; the interaction may facilitate viral entry into host cell. Interacts with human PLSCR1. Homohexamer. Homoheptamer. Interacts with protease NS2. As to quaternary structure, homodimer. Interacts with host SPCS1; this interaction is essential for viral particle assembly. Interacts with envelope glycoprotein E1. Interacts with envelope glycoprotein E2. Interacts with viroporin p7. Interacts with serine protease/helicase NS3. Part of the replication complex composed of NS2, NS3, NS4A, NS4B, NS5A and the RNA-directed RNA polymerase embedded in an ER-derived membranous web. Part of the viral assembly initiation complex composed of NS2, E1, E2, NS3, NS4A, NS5A and the mature core protein. In terms of assembly, interacts with protease NS2. Interacts with non-structural protein 4A; this interaction stabilizes the folding of NS3 serine protease. NS3-NS4A interaction is essential for NS3 activation and allows membrane anchorage of the latter. NS3/NS4A complex also prevents phosphorylation of host IRF3, thus preventing the establishment of dsRNA induced antiviral state. Interacts with host MAVS; this interaction leads to the cleavage and inhibition of host MAVS. Interacts with host TICAM1; this interaction leads to the cleavage and inhibition of host TICAM1. Interacts with host TANK-binding kinase/TBK1; this interaction results in the inhibition of the association between TBK1 and IRF3, which leads to the inhibition of IRF3 activation. Interacts with host RBM24. Part of the replication complex composed of NS2, NS3, NS4A, NS4B, NS5A and the RNA-directed RNA polymerase embedded in an ER-derived membranous web. Part of the viral assembly initiation complex composed of NS2, E1, E2, NS3, NS4A, NS5A and the mature core protein. Interacts with NS3 serine protease; this interaction stabilizes the folding of NS3 serine protease. NS3-NS4A interaction is essential for NS3 activation and allows membrane anchorage of the latter. Interacts with non-structural protein 5A (via N-terminus). Part of the replication complex composed of NS2, NS3, NS4A, NS4B, NS5A and the RNA-directed RNA polymerase embedded in an ER-derived membranous web. Part of the viral assembly initiation complex composed of NS2, E1, E2, NS3, NS4A, NS5A and the mature core protein. As to quaternary structure, homomultimer. Interacts with non-structural protein NS5A. Interacts with host PLA2G4C; this interaction likely initiates the recruitment of replication complexes to lipid droplets. Interacts with host STING; this interaction disrupts the interaction between STING and TBK1 thereby suppressing the interferon signaling. Part of the replication complex composed of NS2, NS3, NS4A, NS4B, NS5A and the RNA-directed RNA polymerase embedded in an ER-derived membranous web. In terms of assembly, monomer. Homodimer; dimerization is required for RNA-binding. Interacts with the mature core protein. Interacts (via N-terminus) with non-structural protein 4A. Interacts with non-structural protein 4B. Interacts (via region D2) with RNA-directed RNA polymerase. Part of the viral assembly initiation complex composed of NS2, E1, E2, NS3, NS4A, NS5A and the mature core protein. Part of the replication complex composed of NS2, NS3, NS4A, NS4B, NS5A and the RNA-directed RNA polymerase embedded in an ER-derived membranous web. Interacts with host GRB2. Interacts with host BIN1. Interacts with host PIK3R1. Interacts with host SRCAP. Interacts with host FKBP8. Interacts (via C-terminus) with host VAPB (via MSP domain). Interacts with host EIF2AK2/PKR; this interaction leads to disruption of EIF2AK2 dimerization by NS5A and probably allows the virus to evade the innate immune response. Interacts (via N-terminus) with host PACSIN2 (via N-terminus); this interaction attenuates protein kinase C alpha-mediated phosphorylation of PACSIN2 by disrupting the interaction between PACSIN2 and PRKCA. Interacts (via N-terminus) with host SRC kinase (via SH2 domain). Interacts with most Src-family kinases. Interacts with host IFI27 and SKP2; promotes the ubiquitin-mediated proteasomal degradation of NS5A. Interacts with host GPS2. Interacts with host TNFRSF21; this interaction allows the modulation by the virus of JNK, p38 MAPK, STAT3, and Akt signaling pathways in a DR6-dependent manner. Interacts (via N-terminus) with host CIDEB (via N-terminus); this interaction seems to regulate the association of HCV particles with APOE. Interacts with host CHKA/Choline Kinase-alpha; CHKA bridges host PI4KA and NS5A and potentiates NS5A-stimulated PI4KA activity, which then facilitates the targeting of the ternary complex to the ER for viral replication. Interacts with host SPSB2 (via C-terminus); this interaction targets NS5A for ubiquitination and degradation. Interacts with host RAB18; this interaction may promote the association of NS5A and other replicase components with lipid droplets. Interacts (via region D2) with host PPIA/CYPA; the interaction stimulates RNA-binding ability of NS5A and is dependent on the peptidyl-prolyl cis-trans isomerase activity of PPIA/CYPA. Interacts with host TRIM14; this interaction induces the degradation of NS5A. Homooligomer. Interacts with non-structural protein 5A. Interacts with host VAPB. Interacts with host PRK2/PKN2. Interacts with host HNRNPA1 and SEPT6; these interactions facilitate viral replication. Part of the replication complex composed of NS2, NS3, NS4A, NS4B, NS5A and the RNA-directed RNA polymerase. It depends on Zn(2+) as a cofactor. Requires Mg(2+) as cofactor. In terms of processing, specific enzymatic cleavages in vivo yield mature proteins. The structural proteins, core, E1, E2 and p7 are produced by proteolytic processing by host signal peptidases. The core protein precursor is synthesized as a 23 kDa, which is retained in the ER membrane through the hydrophobic signal peptide. Cleavage by the signal peptidase releases the 21 kDa mature core protein. The cleavage of the core protein precursor occurs between aminoacids 176 and 188 but the exact cleavage site is not known. Some degraded forms of the core protein appear as well during the course of infection. The other proteins (p7, NS2, NS3, NS4A, NS4B, NS5A and NS5B) are cleaved by the viral proteases. Autoprocessing between NS2 and NS3 is mediated by the NS2 cysteine protease catalytic domain and regulated by the NS3 N-terminal domain. Post-translationally, phosphorylated by host PKC and PKA. Ubiquitinated; mediated by UBE3A and leading to core protein subsequent proteasomal degradation. In terms of processing, highly N-glycosylated. Post-translationally, palmitoylation is required for NS2/3 autoprocessing and E2 recruitment to membranes. Palmitoylated. This modification may play a role in its polymerization or in protein-protein interactions. In terms of processing, phosphorylated on serines in a basal form termed p56. p58 is a hyperphosphorylated form of p56. p56 and p58 coexist in the cell in roughly equivalent amounts. Hyperphosphorylation is dependent on the presence of NS4A. Host CSNK1A1/CKI-alpha or RPS6KB1 kinases may be responsible for NS5A phosphorylation. Post-translationally, tyrosine phosphorylation is essential for the interaction with host SRC. Ubiquitinated. Ubiquitination, most probably at Lys-2350, mediated by host IFI27 and SKP2 leads to proteasomal degradation, restricting viral infection. Ubiquitination by host TRIM22 leads to interruption of viral replication. In terms of processing, the N-terminus is phosphorylated by host PRK2/PKN2.

The protein resides in the host endoplasmic reticulum membrane. It localises to the host mitochondrion membrane. The protein localises to the virion. Its subcellular location is the host cytoplasm. It is found in the host nucleus. The protein resides in the host lipid droplet. It localises to the virion membrane. The protein localises to the host mitochondrion. Its subcellular location is the host cell membrane. It is found in the host perinuclear region. The enzyme catalyses Hydrolysis of four peptide bonds in the viral precursor polyprotein, commonly with Asp or Glu in the P6 position, Cys or Thr in P1 and Ser or Ala in P1'.. The catalysed reaction is a ribonucleoside 5'-triphosphate + H2O = a ribonucleoside 5'-diphosphate + phosphate + H(+). It carries out the reaction ATP + H2O = ADP + phosphate + H(+). It catalyses the reaction RNA(n) + a ribonucleoside 5'-triphosphate = RNA(n+1) + diphosphate. Its activity is regulated as follows. Inhibited by the antiviral drug hexamethylene amiloride. Inhibition by amantadine appears to be genotype-dependent. Also inhibited by long-alkyl-chain iminosugar derivatives. Activity is up-regulated by PRK2/PKN2-mediated phosphorylation. Packages viral RNA to form a viral nucleocapsid, and promotes virion budding. Participates in the viral particle production as a result of its interaction with the non-structural protein 5A. Binds RNA and may function as a RNA chaperone to induce the RNA structural rearrangements taking place during virus replication. Modulates viral translation initiation by interacting with viral IRES and 40S ribosomal subunit. Affects various cell signaling pathways, host immunity and lipid metabolism. Prevents the establishment of cellular antiviral state by blocking the interferon-alpha/beta (IFN-alpha/beta) and IFN-gamma signaling pathways and by blocking the formation of phosphorylated STAT1 and promoting ubiquitin-mediated proteasome-dependent degradation of STAT1. Activates STAT3 leading to cellular transformation. Regulates the activity of cellular genes, including c-myc and c-fos. May repress the promoter of p53, and sequester CREB3 and SP110 isoform 3/Sp110b in the cytoplasm. Represses cell cycle negative regulating factor CDKN1A, thereby interrupting an important check point of normal cell cycle regulation. Targets transcription factors involved in the regulation of inflammatory responses and in the immune response: suppresses TNF-induced NF-kappa-B activation, and activates AP-1. Binds to dendritic cells (DCs) via C1QR1, resulting in down-regulation of T-lymphocytes proliferation. Alters lipid metabolism by interacting with hepatocellular proteins involved in lipid accumulation and storage. Induces up-regulation of FAS promoter activity, and thereby contributes to the increased triglyceride accumulation in hepatocytes (steatosis). Functionally, forms a heterodimer with envelope glycoprotein E2, which mediates virus attachment to the host cell, virion internalization through clathrin-dependent endocytosis and fusion with host membrane. Fusion with the host cell is most likely mediated by both E1 and E2, through conformational rearrangements of the heterodimer required for fusion rather than a classical class II fusion mechanism. E1/E2 heterodimer binds host apolipoproteins such as APOB and ApoE thereby forming a lipo-viro-particle (LVP). APOE associated to the LVP allows the initial virus attachment to cell surface receptors such as the heparan sulfate proteoglycans (HSPGs), syndecan-1 (SDC1), syndecan-1 (SDC2), the low-density lipoprotein receptor (LDLR) and scavenger receptor class B type I (SCARB1). The cholesterol transfer activity of SCARB1 allows E2 exposure and binding of E2 to SCARB1 and the tetraspanin CD81. E1/E2 heterodimer binding on CD81 activates the epithelial growth factor receptor (EGFR) signaling pathway. Diffusion of the complex E1-E2-EGFR-SCARB1-CD81 to the cell lateral membrane allows further interaction with Claudin 1 (CLDN1) and occludin (OCLN) to finally trigger HCV entry. Its function is as follows. Forms a heterodimer with envelope glycoprotein E1, which mediates virus attachment to the host cell, virion internalization through clathrin-dependent endocytosis and fusion with host membrane. Fusion with the host cell is most likely mediated by both E1 and E2, through conformational rearrangements of the heterodimer required for fusion rather than a classical class II fusion mechanism. The interaction between envelope glycoprotein E2 and host apolipoprotein E/APOE allows the proper assembly, maturation and infectivity of the viral particles. This interaction is probably promoted via the up-regulation of cellular autophagy by the virus. E1/E2 heterodimer binds host apolipoproteins such as APOB and APOE thereby forming a lipo-viro-particle (LVP). APOE associated to the LVP allows the initial virus attachment to cell surface receptors such as the heparan sulfate proteoglycans (HSPGs), syndecan-1 (SDC1), syndecan-1 (SDC2), the low-density lipoprotein receptor (LDLR) and scavenger receptor class B type I (SCARB1). The cholesterol transfer activity of SCARB1 allows E2 exposure and binding of E2 to SCARB1 and the tetraspanin CD81. E1/E2 heterodimer binding on CD81 activates the epithelial growth factor receptor (EGFR) signaling pathway. Diffusion of the complex E1-E2-EGFR-SCARB1-CD81 to the cell lateral membrane allows further interaction with Claudin 1 (CLDN1) and occludin (OCLN) to finally trigger HCV entry. Inhibits host EIF2AK2/PKR activation, preventing the establishment of an antiviral state. Viral ligand for CD209/DC-SIGN and CLEC4M/DC-SIGNR, which are respectively found on dendritic cells (DCs), and on liver sinusoidal endothelial cells and macrophage-like cells of lymph node sinuses. These interactions allow the capture of circulating HCV particles by these cells and subsequent facilitated transmission to permissive cells such as hepatocytes and lymphocyte subpopulations. The interaction between E2 and host amino acid transporter complex formed by SLC3A2 and SLC7A5/LAT1 may facilitate viral entry into host cell. In terms of biological role, ion channel protein that acts as a viroporin and plays an essential role in the assembly, envelopment and secretion of viral particles. Regulates the host cell secretory pathway, which induces the intracellular retention of viral glycoproteins and favors assembly of viral particles. Creates a pore in acidic organelles and releases Ca(2+) and H(+) in the cytoplasm of infected cells, leading to a productive viral infection. High levels of cytoplasmic Ca(2+) may trigger membrane trafficking and transport of viral ER-associated proteins to viroplasms, sites of viral genome replication. This ionic imbalance induces the assembly of the inflammasome complex, which triggers the maturation of pro-IL-1beta into IL-1beta through the action of caspase-1. Targets also host mitochondria and induces mitochondrial depolarization. In addition of its role as a viroporin, acts as a lipid raft adhesion factor. Cysteine protease required for the proteolytic auto-cleavage between the non-structural proteins NS2 and NS3. The N-terminus of NS3 is required for the function of NS2 protease (active region NS2-3). Promotes the initiation of viral particle assembly by mediating the interaction between structural and non-structural proteins. Functionally, displays three enzymatic activities: serine protease with a chymotrypsin-like fold, NTPase and RNA helicase. NS3 serine protease, in association with NS4A, is responsible for the cleavages of NS3-NS4A, NS4A-NS4B, NS4B-NS5A and NS5A-NS5B. The NS3/NS4A complex prevents phosphorylation of host IRF3, thus preventing the establishment of dsRNA induced antiviral state. The NS3/NS4A complex induces host amino acid transporter component SLC3A2, thus contributing to HCV propagation. NS3 RNA helicase binds to RNA and unwinds both dsDNA and dsRNA in the 3' to 5' direction, and likely resolves RNA complicated stable secondary structures in the template strand. Binds a single ATP and catalyzes the unzipping of a single base pair of dsRNA. Inhibits host antiviral proteins TBK1 and IRF3 thereby preventing the establishment of an antiviral state. Cleaves host MAVS/CARDIF thereby preventing the establishment of an antiviral state. Cleaves host TICAM1/TRIF, thereby disrupting TLR3 signaling and preventing the establishment of an antiviral state. Its function is as follows. Peptide cofactor which forms a non-covalent complex with the N-terminal of NS3 serine protease. The NS3/NS4A complex prevents phosphorylation of host IRF3, thus preventing the establishment of dsRNA induced antiviral state. The NS3/NS4A complex induces host amino acid transporter component SLC3A2, thus contributing to HCV propagation. In terms of biological role, induces a specific membrane alteration that serves as a scaffold for the virus replication complex. This membrane alteration gives rise to the so-called ER-derived membranous web that contains the replication complex. NS4B self-interaction contributes to its function in membranous web formation. Promotes host TRIF protein degradation in a CASP8-dependent manner thereby inhibiting host TLR3-mediated interferon signaling. Disrupts the interaction between STING and TBK1 contributing to the inhibition of interferon signaling. Phosphorylated protein that is indispensable for viral replication and assembly. Both hypo- and hyperphosphorylated states are required for the viral life cycle. The hyperphosphorylated form of NS5A is an inhibitor of viral replication. Involved in RNA-binding and especially in binding to the viral genome. Zinc is essential for RNA-binding. Participates in the viral particle production as a result of its interaction with the mature viral core protein. Its interaction with host VAPB may target the viral replication complex to vesicles. Down-regulates viral IRES translation initiation. Mediates interferon resistance, presumably by interacting with and inhibiting host EIF2AK2/PKR. Prevents BIN1-induced apoptosis. Acts as a transcriptional activator of some host genes important for viral replication when localized in the nucleus. Via the interaction with host PACSIN2, modulates lipid droplet formation in order to promote virion assembly. Modulates TNFRSF21/DR6 signaling pathway for viral propagation. Functionally, RNA-dependent RNA polymerase that performs primer-template recognition and RNA synthesis during viral replication. Initiates RNA transcription/replication at a flavin adenine dinucleotide (FAD), resulting in a 5'- FAD cap on viral RNAs. In this way, recognition of viral 5' RNA by host pattern recognition receptors can be bypassed, thereby evading activation of antiviral pathways. The protein is Genome polyprotein of Homo sapiens (Human).